We begin with the raw amino-acid sequence, 435 residues long: GTPase Der (435 aa).

2 EngA-type G domains span residues P3 to D168 and V176 to R351. GTP-binding positions include G9–S16, D56–Y60, N120–D123, G182–S189, D229–L233, and N294–D297. The 84-residue stretch at M352–K435 folds into the KH-like domain.

This sequence belongs to the TRAFAC class TrmE-Era-EngA-EngB-Septin-like GTPase superfamily. EngA (Der) GTPase family. As to quaternary structure, associates with the 50S ribosomal subunit.

Functionally, GTPase that plays an essential role in the late steps of ribosome biogenesis. In Chloroherpeton thalassium (strain ATCC 35110 / GB-78), this protein is GTPase Der.